Consider the following 1042-residue polypeptide: Ribosome biogenesis protein NOC1 (1042 aa).

6 disordered regions span residues 1–20, 28–79, 101–128, 148–214, 546–567, and 897–1020; these read MGLK…AFDE, GKID…AAKD, LVAD…SLDQ, NRED…IPQD, LNGD…GSLT, and GKMT…LKTL. 2 stretches are compositionally biased toward basic and acidic residues: residues 9–18 and 63–79; these read QQRDIGKPAF and HPTE…AAKD. Residues 118–128 show a composition bias toward polar residues; that stretch reads PKISSEQSLDQ. Composition is skewed to acidic residues over residues 153–164 and 173–194; these read NTEDEASPDEDA and SDSD…SFSD. Over residues 195–207 the composition is skewed to basic and acidic residues; it reads NEEKVTEKVDSGE. Residues 902–911 show a composition bias toward basic and acidic residues; sequence KRDETKREFG. Residues 937 to 957 are compositionally biased toward acidic residues; sequence NVDDDSDADLGDFDYSDDEED. The segment covering 962 to 972 has biased composition (low complexity); sequence DGSMSDIGMDS. Residues 978–994 show a composition bias toward acidic residues; sequence IFDDAGESDEQSSGEDE.

This sequence belongs to the CBF/MAK21 family. Interacts with NOC2. Forms a nucleolar complex with NOC2 that binds to 90S and 66S pre-ribosomes.

It localises to the nucleus. Its subcellular location is the nucleolus. Required for 60S ribosomal subunit synthesis. The chain is Ribosome biogenesis protein NOC1 (NOC1) from Chaetomium thermophilum (strain DSM 1495 / CBS 144.50 / IMI 039719) (Thermochaetoides thermophila).